The primary structure comprises 462 residues: Argininosuccinate lyase (462 aa).

The protein belongs to the lyase 1 family. Argininosuccinate lyase subfamily.

It localises to the cytoplasm. It carries out the reaction 2-(N(omega)-L-arginino)succinate = fumarate + L-arginine. Its pathway is amino-acid biosynthesis; L-arginine biosynthesis; L-arginine from L-ornithine and carbamoyl phosphate: step 3/3. This Bacillus cereus (strain ATCC 14579 / DSM 31 / CCUG 7414 / JCM 2152 / NBRC 15305 / NCIMB 9373 / NCTC 2599 / NRRL B-3711) protein is Argininosuccinate lyase.